Here is a 130-residue protein sequence, read N- to C-terminus: RNA silencing suppressor p14 (130 aa).

Functionally, acts as a suppressor of RNA-mediated gene silencing, also known as post-transcriptional gene silencing (PTGS), a mechanism of plant viral defense that limits the accumulation of viral RNAs. Binds to dsRNAs without size specificity. The chain is RNA silencing suppressor p14 from Pothos latent virus (isolate Pigeonpea/India) (PoLV).